We begin with the raw amino-acid sequence, 327 residues long: MGNADLRQLAAIEETPFADLEGSVVAVDAHNWLYKYLTTTVQWTGADVYTTSDGTEVANLVGAVQGLPKFFEHGLTPVFVWDGGVTELKDDEIADRREQRERYEEQLDDAREAGDAAEAARLDARTQRLTPTIHETTRELFDLLDIPQVEAPAEGEAQAAYMTRTDDAVDYAGSDDYDCLLLGSPVTLRQLTSSGHPELMDFDATLAEHDLTWEQLVDVGILCGTDFNPGIDGFGPTTALDAIGEHGDLWDVLAAEGEHVAHGDRIRELFLNPDVTDDYVIDPDVSPAIDAARAFVTDEWEVDADAVARGFERIDAAAAQTGLDRWT.

Positions 1 to 100 (MGNADLRQLA…DEIADRREQR (100 aa)) are N-domain. D28, D82, E154, E156, D176, D178, and D226 together coordinate Mg(2+). An I-domain region spans residues 118 to 247 (EAARLDARTQ…TALDAIGEHG (130 aa)). The interval 319-327 (AQTGLDRWT) is interaction with PCNA.

Belongs to the XPG/RAD2 endonuclease family. FEN1 subfamily. As to quaternary structure, interacts with PCNA. PCNA stimulates the nuclease activity without altering cleavage specificity. Requires Mg(2+) as cofactor.

Structure-specific nuclease with 5'-flap endonuclease and 5'-3' exonuclease activities involved in DNA replication and repair. During DNA replication, cleaves the 5'-overhanging flap structure that is generated by displacement synthesis when DNA polymerase encounters the 5'-end of a downstream Okazaki fragment. Binds the unpaired 3'-DNA end and kinks the DNA to facilitate 5' cleavage specificity. Cleaves one nucleotide into the double-stranded DNA from the junction in flap DNA, leaving a nick for ligation. Also involved in the base excision repair (BER) pathway. Acts as a genome stabilization factor that prevents flaps from equilibrating into structures that lead to duplications and deletions. Also possesses 5'-3' exonuclease activity on nicked or gapped double-stranded DNA. This Halobacterium salinarum (strain ATCC 29341 / DSM 671 / R1) protein is Flap endonuclease 1.